We begin with the raw amino-acid sequence, 273 residues long: Imidazole glycerol phosphate synthase subunit HisF (273 aa).

Catalysis depends on residues D11 and D134.

Belongs to the HisA/HisF family. As to quaternary structure, heterodimer of HisH and HisF.

It is found in the cytoplasm. The enzyme catalyses 5-[(5-phospho-1-deoxy-D-ribulos-1-ylimino)methylamino]-1-(5-phospho-beta-D-ribosyl)imidazole-4-carboxamide + L-glutamine = D-erythro-1-(imidazol-4-yl)glycerol 3-phosphate + 5-amino-1-(5-phospho-beta-D-ribosyl)imidazole-4-carboxamide + L-glutamate + H(+). Its pathway is amino-acid biosynthesis; L-histidine biosynthesis; L-histidine from 5-phospho-alpha-D-ribose 1-diphosphate: step 5/9. Its function is as follows. IGPS catalyzes the conversion of PRFAR and glutamine to IGP, AICAR and glutamate. The HisF subunit catalyzes the cyclization activity that produces IGP and AICAR from PRFAR using the ammonia provided by the HisH subunit. The protein is Imidazole glycerol phosphate synthase subunit HisF of Methanosarcina mazei (strain ATCC BAA-159 / DSM 3647 / Goe1 / Go1 / JCM 11833 / OCM 88) (Methanosarcina frisia).